The sequence spans 115 residues: Large ribosomal subunit protein bL31B (115 aa).

This sequence belongs to the bacterial ribosomal protein bL31 family. Type B subfamily. In terms of assembly, part of the 50S ribosomal subunit.

The polypeptide is Large ribosomal subunit protein bL31B (Polynucleobacter asymbioticus (strain DSM 18221 / CIP 109841 / QLW-P1DMWA-1) (Polynucleobacter necessarius subsp. asymbioticus)).